The following is a 504-amino-acid chain: Probable cytochrome P450 305a1 (504 aa).

Heme is bound at residue Cys-450.

It belongs to the cytochrome P450 family. It depends on heme as a cofactor.

The protein resides in the endoplasmic reticulum membrane. It localises to the microsome membrane. In terms of biological role, may be involved in the metabolism of insect hormones and in the breakdown of synthetic insecticides. The sequence is that of Probable cytochrome P450 305a1 (Cyp305a1) from Drosophila melanogaster (Fruit fly).